The chain runs to 1050 residues: DNA polymerase I A, chloroplastic/mitochondrial (1050 aa).

A chloroplast and mitochondrion-targeting transit peptide spans 1 to 91 (MAMGVSLTSH…VVFNGEWELR (91 aa)). The tract at residues 202 to 240 (PRKGLDVGDNMDVNPKGEGIQRPLISDKSSGTANGNKNT) is disordered. Over residues 228–240 (DKSSGTANGNKNT) the composition is skewed to polar residues. In terms of domain architecture, 3'-5' exonuclease spans 312 to 490 (ELICFSIYCG…LYESMTKKLQ (179 aa)). A disordered region spans residues 673 to 694 (VVEDDDVETSETQKSKTDDETD). Residues 717–1048 (AIASLCEVCS…DAKCAQNWYA (332 aa)) form a polymerase region.

Belongs to the DNA polymerase type-A family. In terms of tissue distribution, expressed in shoot apical meristem.

It localises to the plastid. Its subcellular location is the chloroplast. The protein localises to the mitochondrion. The catalysed reaction is DNA(n) + a 2'-deoxyribonucleoside 5'-triphosphate = DNA(n+1) + diphosphate. Not inhibited by aphidicolin. Its function is as follows. In addition to polymerase activity, this DNA polymerase exhibits 5'-3' exonuclease activity. Required for DNA replication and accumulation in plastids and mitochondria. May be required for DNA repair in both organelles. In Arabidopsis thaliana (Mouse-ear cress), this protein is DNA polymerase I A, chloroplastic/mitochondrial (POLIA).